Reading from the N-terminus, the 257-residue chain is Ribonuclease HIII (257 aa).

The 187-residue stretch at 71 to 257 folds into the RNase H type-2 domain; that stretch reads KKLPGCDESG…ERFIKLNFNV (187 aa). A divalent metal cation-binding residues include aspartate 77, glutamate 78, and aspartate 179.

It belongs to the RNase HII family. RnhC subfamily. It depends on Mn(2+) as a cofactor. Mg(2+) serves as cofactor.

The protein resides in the cytoplasm. The catalysed reaction is Endonucleolytic cleavage to 5'-phosphomonoester.. Its function is as follows. Endonuclease that specifically degrades the RNA of RNA-DNA hybrids. This chain is Ribonuclease HIII (rnhC), found in Aquifex aeolicus (strain VF5).